The following is a 386-amino-acid chain: Mannitol-1-phosphate 5-dehydrogenase (386 aa).

4-15 (AVHFGAGNIGRG) is an NAD(+) binding site.

The protein belongs to the mannitol dehydrogenase family.

It catalyses the reaction D-mannitol 1-phosphate + NAD(+) = beta-D-fructose 6-phosphate + NADH + H(+). The polypeptide is Mannitol-1-phosphate 5-dehydrogenase (Oceanobacillus iheyensis (strain DSM 14371 / CIP 107618 / JCM 11309 / KCTC 3954 / HTE831)).